The following is a 478-amino-acid chain: Glutamyl-tRNA(Gln) amidotransferase subunit A (478 aa).

Residues K72 and S147 each act as charge relay system in the active site. Catalysis depends on S171, which acts as the Acyl-ester intermediate.

Belongs to the amidase family. GatA subfamily. Heterotrimer of A, B and C subunits.

The enzyme catalyses L-glutamyl-tRNA(Gln) + L-glutamine + ATP + H2O = L-glutaminyl-tRNA(Gln) + L-glutamate + ADP + phosphate + H(+). Allows the formation of correctly charged Gln-tRNA(Gln) through the transamidation of misacylated Glu-tRNA(Gln) in organisms which lack glutaminyl-tRNA synthetase. The reaction takes place in the presence of glutamine and ATP through an activated gamma-phospho-Glu-tRNA(Gln). In Saccharolobus solfataricus (strain ATCC 35092 / DSM 1617 / JCM 11322 / P2) (Sulfolobus solfataricus), this protein is Glutamyl-tRNA(Gln) amidotransferase subunit A.